Consider the following 184-residue polypeptide: Pyridoxal 5'-phosphate synthase subunit PdxT (184 aa).

An L-glutamine-binding site is contributed by 46–48 (GES). The active-site Nucleophile is cysteine 75. Residues arginine 101 and 129-130 (IR) each bind L-glutamine. Active-site charge relay system residues include histidine 165 and glutamate 167.

This sequence belongs to the glutaminase PdxT/SNO family. In terms of assembly, in the presence of PdxS, forms a dodecamer of heterodimers. Only shows activity in the heterodimer.

The enzyme catalyses aldehydo-D-ribose 5-phosphate + D-glyceraldehyde 3-phosphate + L-glutamine = pyridoxal 5'-phosphate + L-glutamate + phosphate + 3 H2O + H(+). The catalysed reaction is L-glutamine + H2O = L-glutamate + NH4(+). It participates in cofactor biosynthesis; pyridoxal 5'-phosphate biosynthesis. Catalyzes the hydrolysis of glutamine to glutamate and ammonia as part of the biosynthesis of pyridoxal 5'-phosphate. The resulting ammonia molecule is channeled to the active site of PdxS. This Staphylococcus haemolyticus (strain JCSC1435) protein is Pyridoxal 5'-phosphate synthase subunit PdxT.